Here is a 702-residue protein sequence, read N- to C-terminus: Arginine decarboxylase 1 (702 aa).

K151 is modified (N6-(pyridoxal phosphate)lysine). 336–346 (IDVGGGLGIDY) contacts substrate. Residues 668–686 (ASGESSGMSSDSEGSAAGA) show a composition bias toward low complexity. Residues 668–702 (ASGESSGMSSDSEGSAAGAAEEDDDEWEFMRGLTV) are disordered.

Belongs to the Orn/Lys/Arg decarboxylase class-II family. SpeA subfamily. It depends on pyridoxal 5'-phosphate as a cofactor. Mg(2+) serves as cofactor. Expressed in roots, leaves and stems (at protein level).

The enzyme catalyses L-arginine + H(+) = agmatine + CO2. Its pathway is amine and polyamine biosynthesis; agmatine biosynthesis; agmatine from L-arginine: step 1/1. This Oryza sativa subsp. japonica (Rice) protein is Arginine decarboxylase 1 (ADC1).